The following is a 144-amino-acid chain: Kunitz-type elastase inhibitor BrEI (144 aa).

N38 carries an N-linked (GlcNAc...) asparagine glycan. A disulfide bond links C41 and C88.

The protein belongs to the leguminous Kunitz-type inhibitor family.

Inhibitor of porcine pancreatic elastase with a Ki of 27 nM. Does not inhibit human neutrophil elastase, bovine trypsin, human plasma kallikrein or porcine pancreatic kallikrein. The protein is Kunitz-type elastase inhibitor BrEI of Bauhinia rufa (Orchid tree).